A 460-amino-acid chain; its full sequence is Methionine aminopeptidase 2-1 (460 aa).

The segment at 1–90 is disordered; it reads MGSKSPNGED…SAQAAQQTAP (90 aa). Positions 30–39 are enriched in low complexity; sequence SAAASGLLRG. Acidic residues predominate over residues 42-52; it reads EDQDEDGDDDE. A compositionally biased stretch (basic residues) spans 69 to 81; sequence TKKRRRNNKKKKS. H212 is a binding site for substrate. A divalent metal cation is bound by residues D233, D244, and H313. H321 serves as a coordination point for substrate. 2 residues coordinate a divalent metal cation: E346 and E441.

Belongs to the peptidase M24A family. Methionine aminopeptidase eukaryotic type 2 subfamily. The cofactor is Co(2+). Zn(2+) is required as a cofactor. Mn(2+) serves as cofactor. Requires Fe(2+) as cofactor.

It is found in the cytoplasm. It carries out the reaction Release of N-terminal amino acids, preferentially methionine, from peptides and arylamides.. Cotranslationally removes the N-terminal methionine from nascent proteins. The N-terminal methionine is often cleaved when the second residue in the primary sequence is small and uncharged (Met-Ala-, Cys, Gly, Pro, Ser, Thr, or Val). In Leptosphaeria maculans (strain JN3 / isolate v23.1.3 / race Av1-4-5-6-7-8) (Blackleg fungus), this protein is Methionine aminopeptidase 2-1.